The following is a 407-amino-acid chain: MKKLAYLECPTGIAGDMCLGALVDLGVPIDYLNQHLKGLGIDSEYRLWAEKVHRQGQQGTKVHVDLTLDPTHSDHHHHSHHSPHRHLPTIEQLIVNATLPPKAQDWSLKVFRQLALAEGAVHGIAPEKVHFHEVGATDAIVDIVGTCLGLDWLGIDQLYCSAMPTGGGTVKAAHGCLPVPVPAVLKLWELRHVPIYNNGINKELVTPTGAAIATTLSLEFGSSPSMRVQKVGLGAGTADLPIPNLLRLWLGESTETPQKETISVLETQIDDLSPQAIGYVFEALFEVGALDVFTSAIGMKKSRPGILLTVICPPDKVSVCERVIFRETTTLGIRHLTQERSILQREIHWVQTAYGQVKVKVASQGTGENQQIFNVQPEYEDCAELARKHNIPWRIIHQLALAAWNNH.

The protein belongs to the LarC family.

This Gloeothece citriformis (strain PCC 7424) (Cyanothece sp. (strain PCC 7424)) protein is Putative nickel insertion protein.